The sequence spans 55 residues: MINLAVVFLIIAVIAALLGVTGVAGMAAEMAWILFVIGIVLAIVFWVLGRRPPPM.

The next 2 membrane-spanning stretches (helical) occupy residues 4–24 (LAVV…TGVA) and 28–48 (AEMA…FWVL).

Belongs to the UPF0391 family.

The protein localises to the cell membrane. This chain is UPF0391 membrane protein Neut_2351/Neut_2360, found in Nitrosomonas eutropha (strain DSM 101675 / C91 / Nm57).